A 301-amino-acid polypeptide reads, in one-letter code: Cutinase (301 aa).

An N-terminal signal peptide occupies residues 1-40 (MAVMTPRRERSSLLSRALQVTAAAATALVTAVSLAAPAHA). Tyr100 serves as a coordination point for poly(ethylene terephthalate). The active-site Nucleophile is the Ser170. Positions 171 and 195 each coordinate poly(ethylene terephthalate). Catalysis depends on charge relay system residues Asp216 and His248. The cysteines at positions 281 and 299 are disulfide-linked.

It belongs to the AB hydrolase superfamily.

It localises to the secreted. The protein resides in the periplasm. The enzyme catalyses a butanoate ester + H2O = an aliphatic alcohol + butanoate + H(+). It catalyses the reaction (ethylene terephthalate)(n) + H2O = (ethylene terephthalate)(n-1) + 4-[(2-hydroxyethoxy)carbonyl]benzoate + H(+). It carries out the reaction cutin + H2O = cutin monomers.. Activated by magnesium ions. Activated by calcium ions. Inhibited by the serine hydrolase inhibitor phenylmethanesulfonyl fluoride (PMSF). Its function is as follows. Catalyzes the hydrolysis of cutin, a polyester that forms the structure of plant cuticle. Shows esterase activity towards p-nitrophenol-linked aliphatic esters (pNP-aliphatic esters). Also hydrolyzes the triglyceride triolein. Capable of degrading the plastic poly(ethylene terephthalate) (PET), the most abundant polyester plastic in the world. The polypeptide is Cutinase (Thermobifida fusca (strain YX)).